We begin with the raw amino-acid sequence, 272 residues long: Methyl-CpG-binding domain-containing protein 2 (272 aa).

Polar residues predominate over residues 1 to 15; it reads MSMSQSRAVQRSSSP. Residues 1–24 are disordered; the sequence is MSMSQSRAVQRSSSPNEDRGENQL. Residues 53-112 form a CW-type zinc finger; that stretch reads CPSIGAFTVQCASCFKWRLMPSMQKYEEIREQLLENPFFCDTAREWKPDISCDVPADIYQ. The MBD-associated domain (MAD) motif lies at 62–104; the sequence is QCASCFKWRLMPSMQKYEEIREQLLENPFFCDTAREWKPDISC. Residues Cys63, Cys66, Cys92, and Cys104 each coordinate Zn(2+). In terms of domain architecture, MBD spans 118 to 192; the sequence is WAIDKPNISR…SQFSFQIPKP (75 aa). A compositionally biased stretch (polar residues) spans 236-250; the sequence is LGTPTESGLNNSHYQ. Residues 236–272 are disordered; sequence LGTPTESGLNNSHYQPSKKKKTSTLSIFGSNDELADR.

As to quaternary structure, interacts (via MBD domain) with DDM1. Expressed in buds, flowers, stems, siliques and mature seeds.

It localises to the nucleus. Its function is as follows. Probable transcriptional regulator. The polypeptide is Methyl-CpG-binding domain-containing protein 2 (MBD2) (Arabidopsis thaliana (Mouse-ear cress)).